The primary structure comprises 508 residues: Photosystem II CP47 reaction center protein (508 aa).

A run of 6 helical transmembrane segments spans residues 21–36 (SVHI…WAGS), 101–115 (IVFS…IWHW), 140–156 (GIHL…FGAF), 203–218 (IAAG…FHLS), 237–252 (VLSS…AFVV), and 457–472 (SFAL…HGAR).

It belongs to the PsbB/PsbC family. PsbB subfamily. As to quaternary structure, PSII is composed of 1 copy each of membrane proteins PsbA, PsbB, PsbC, PsbD, PsbE, PsbF, PsbH, PsbI, PsbJ, PsbK, PsbL, PsbM, PsbT, PsbX, PsbY, PsbZ, Psb30/Ycf12, at least 3 peripheral proteins of the oxygen-evolving complex and a large number of cofactors. It forms dimeric complexes. Binds multiple chlorophylls. PSII binds additional chlorophylls, carotenoids and specific lipids. serves as cofactor.

The protein localises to the plastid. It localises to the chloroplast thylakoid membrane. Functionally, one of the components of the core complex of photosystem II (PSII). It binds chlorophyll and helps catalyze the primary light-induced photochemical processes of PSII. PSII is a light-driven water:plastoquinone oxidoreductase, using light energy to abstract electrons from H(2)O, generating O(2) and a proton gradient subsequently used for ATP formation. The chain is Photosystem II CP47 reaction center protein from Morus indica (Mulberry).